A 414-amino-acid polypeptide reads, in one-letter code: uncharacterized protein (414 aa).

This sequence belongs to the glycosyltransferase 28 family.

This is an uncharacterized protein from Mycobacterium tuberculosis (strain CDC 1551 / Oshkosh).